We begin with the raw amino-acid sequence, 434 residues long: F-box only protein 15 (434 aa).

An F-box domain is found at 1 to 41 (MPSEILLKIFSYLDAVSLLCAGCVSRRFYHLANDNFIWIRI).

In terms of assembly, directly interacts with SKP1 and CUL1.

In terms of biological role, substrate-recognition component of the SCF (SKP1-CUL1-F-box protein)-type E3 ubiquitin ligase complex. The chain is F-box only protein 15 (FBXO15) from Macaca fascicularis (Crab-eating macaque).